The chain runs to 452 residues: F-box only protein 47 (452 aa).

One can recognise an F-box domain in the interval 41–91 (FGNFKALPLEIFQIILKYLSVKDISMLSMVSKTVSQHIINYISTSSGSKRL).

In terms of assembly, part of a SCF (SKP1-cullin-F-box) protein ligase complex. Widely expressed, with highest levels in kidney, liver and pancreas. Down-regulated in tumors.

In terms of biological role, probably recognizes and binds to some phosphorylated proteins and promotes their ubiquitination and degradation. The protein is F-box only protein 47 of Homo sapiens (Human).